The sequence spans 203 residues: Large ribosomal subunit protein eL15 (203 aa).

The tract at residues 166-203 (ATGKKSRGINKGHRYNNTRSGRRHTWKRQNTQSYWRYR) is disordered. A compositionally biased stretch (basic residues) spans 169-192 (KKSRGINKGHRYNNTRSGRRHTWK). Residues 193–203 (RQNTQSYWRYR) show a composition bias toward polar residues.

This sequence belongs to the eukaryotic ribosomal protein eL15 family.

This Aspergillus niger protein is Large ribosomal subunit protein eL15 (rpl15).